Reading from the N-terminus, the 425-residue chain is Raffinose permease (425 aa).

At 1-11 (MNSASTHKNTD) the chain is on the cytoplasmic side. The helical transmembrane segment at 12-32 (FWIFGLFFFLYFFIMATCFPF) threads the bilayer. Residues 33-48 (LPVWLSDVVGLSKTDT) are Periplasmic-facing. A helical membrane pass occupies residues 49-69 (GIVFSCLSLFAISFQPLLGVI). Topologically, residues 70-78 (SDRLGLKKN) are cytoplasmic. A helical membrane pass occupies residues 79–99 (LIWSISLLLVFFAPFFLYVFA). Residues 100-105 (PLLHLN) lie on the Periplasmic side of the membrane. A helical transmembrane segment spans residues 106–126 (IWAGALTGGVFIGFVFSAGAG). At 127-147 (AIEAYIERVSRSSGFEYGKAR) the chain is on the cytoplasmic side. The helical transmembrane segment at 148–168 (MFGCLGWALCATMAGILFNVD) threads the bilayer. Pro-169 is a topological domain (periplasmic). A helical membrane pass occupies residues 170–190 (SLVFWMGSGGALLLLLLLYLA). Residues 191–229 (RPSTSQTAMVMNALGANSSLISTRMVFSLFRMRQMWMFV) are Cytoplasmic-facing. Residues 230 to 250 (LYTIGVACVYDVFDQQFAIFF) form a helical membrane-spanning segment. Over 251 to 265 (RSFFDTPQAGIKAFG) the chain is Periplasmic. The helical transmembrane segment at 266–286 (FATTAGEICNAIIMFCTPWII) threads the bilayer. Over 287–294 (NRIGAKNT) the chain is Cytoplasmic. The chain crosses the membrane as a helical span at residues 295-315 (LLVAGGIMTIRITGSAFATTM). Residue Thr-316 is a topological domain, periplasmic. A helical membrane pass occupies residues 317-337 (EVVILKMLHALEVPFLLVGAF). Residues 338 to 351 (KYITGVFDTRLSAT) are Cytoplasmic-facing. The chain crosses the membrane as a helical span at residues 352–372 (VYLIGFQFSKQLAAILLSTFA). Residues 373 to 383 (GHLYDRMGFQN) are Periplasmic-facing. A helical transmembrane segment spans residues 384–404 (TYFVLGMIVLTVTVISAFTLS). The Cytoplasmic portion of the chain corresponds to 405 to 425 (SSPGIVHPSVEKAPVAHSEIN).

This sequence belongs to the major facilitator superfamily. Oligosaccharide:H(+) symporter (OHS) (TC 2.A.1.5) family. Monomer.

It localises to the cell inner membrane. In terms of biological role, responsible for transport of raffinose into the cell. Can also transport lactose and melibiose. Has weak activity with maltose. This chain is Raffinose permease, found in Escherichia coli.